A 228-amino-acid polypeptide reads, in one-letter code: Claudin-10 (228 aa).

The chain crosses the membrane as a helical span at residues 1 to 21 (MASTASEIIAFMVSISGWVLV). The Extracellular segment spans residues 22–80 (SSTLPTDYWKVSTIDGTVITTATYWANLWKACVTDSTGVSNCKDFPSMLALDGYIQACR). A helical membrane pass occupies residues 81–101 (GLMIAAVSLGFFGSIFALFGM). Residues 102 to 115 (KCTKVGGSDKAKAK) are Cytoplasmic-facing. The helical transmembrane segment at 116-136 (IACLAGIVFILSGLCSMTGCS) threads the bilayer. The Extracellular segment spans residues 137-160 (LYANKITTEFFDPLFVEQKYELGA). Residues 161 to 181 (ALFIGWAGASLCIIGGVIFCF) traverse the membrane as a helical segment. The Cytoplasmic portion of the chain corresponds to 182 to 228 (SISDNNKTPRYTYNGATSVMSSRTKYHGGEDFKTTNPSKQFDKNAYV).

It belongs to the claudin family. Can form homodimers both in trans (interaction between CLDN10 molecules in opposing membranes) and in cis (interaction between CLDN10 molecules within one membrane). As to quaternary structure, interacts with CLDN19. Expressed in the kidney, eccrine sweat glands and in all layers of the epidermis. In the kidney, it is detected in the thick ascending limb of Henle's loop (TAL). In the sweat glands, it is expressed in cells from secretory portions, corresponding to the clear cells.

It is found in the cell junction. Its subcellular location is the tight junction. The protein localises to the cell membrane. The catalysed reaction is Na(+)(in) = Na(+)(out). It carries out the reaction Li(+)(in) = Li(+)(out). The enzyme catalyses K(+)(in) = K(+)(out). It catalyses the reaction Rb(+)(in) = Rb(+)(out). The catalysed reaction is Cs(+)(in) = Cs(+)(out). It carries out the reaction NH4(+)(in) = NH4(+)(out). The enzyme catalyses methylamine(out) = methylamine(in). It catalyses the reaction Mg(2+)(in) = Mg(2+)(out). The catalysed reaction is Ca(2+)(in) = Ca(2+)(out). It carries out the reaction Sr(2+)(in) = Sr(2+)(out). The enzyme catalyses chloride(in) = chloride(out). It catalyses the reaction nitrate(in) = nitrate(out). Forms paracellular channels: polymerizes in tight junction strands with cation- and anion-selective channels through the strands, conveying epithelial permeability in a process known as paracellular tight junction permeability. Its function is as follows. Forms cation-selective paracellular channels. In sweat glands and in the thick ascending limb (TAL) of Henle's loop in kidney, it controls paracellular sodium permeability which is essential for proper sweat production and renal function. Functionally, forms anion-selective paracellular channels. In renal proximal tubules, it conveys selective chloride over hydrogencarbonate anion permeability which is required for renal chloride reabsorption and salt homeostasis. This Homo sapiens (Human) protein is Claudin-10.